Consider the following 96-residue polypeptide: Seed trypsin/chymotrypsin inhibitor IVA (96 aa).

The signal sequence occupies residues 1–10; that stretch reads LSFAANVVNA. Positions 11 to 24 are excised as a propeptide; that stretch reads RFDSTSFITQVLSN. Intrachain disulfides connect Cys-32–Cys-85, Cys-33–Cys-48, Cys-36–Cys-81, Cys-38–Cys-46, Cys-55–Cys-62, Cys-59–Cys-74, and Cys-64–Cys-72. A propeptide spans 88–96 (removed in PSTI I); sequence SEVEEVIKN.

The protein belongs to the Bowman-Birk serine protease inhibitor family. Seed.

Functionally, inhibitor of trypsin and of chymotrypsin. May function as a natural phytochemical defense against predators. This Pisum sativum (Garden pea) protein is Seed trypsin/chymotrypsin inhibitor IVA (TI1236).